Consider the following 339-residue polypeptide: tRNA N6-adenosine threonylcarbamoyltransferase (339 aa).

Fe cation contacts are provided by histidine 115 and histidine 119. Residues 136-140 (LISGG), aspartate 168, glutamate 185, and serine 265 each bind substrate. Aspartate 293 lines the Fe cation pocket.

It belongs to the KAE1 / TsaD family. Requires Fe(2+) as cofactor.

The protein localises to the cytoplasm. The enzyme catalyses L-threonylcarbamoyladenylate + adenosine(37) in tRNA = N(6)-L-threonylcarbamoyladenosine(37) in tRNA + AMP + H(+). Its function is as follows. Required for the formation of a threonylcarbamoyl group on adenosine at position 37 (t(6)A37) in tRNAs that read codons beginning with adenine. Is probably involved in the transfer of the threonylcarbamoyl moiety of threonylcarbamoyl-AMP (TC-AMP) to the N6 group of A37. This chain is tRNA N6-adenosine threonylcarbamoyltransferase, found in Pyrobaculum calidifontis (strain DSM 21063 / JCM 11548 / VA1).